The primary structure comprises 279 residues: Protein ABIL4 (279 aa).

Disordered regions lie at residues 192 to 211 and 219 to 241; these read VHNN…PMRF and LLKR…EPQR. The segment covering 194-208 has biased composition (polar residues); it reads NNINNRTPNKRSNSP. Low complexity predominate over residues 219 to 228; that stretch reads LLKRSSSPSQ.

The protein belongs to the ABI family. Binds SCAR.

It localises to the cytoplasm. The protein resides in the cytoskeleton. Its function is as follows. Involved in regulation of actin and microtubule organization. Part of a WAVE complex that activates the Arp2/3 complex. The protein is Protein ABIL4 (ABIL4) of Arabidopsis thaliana (Mouse-ear cress).